The following is a 418-amino-acid chain: Tyrosine--tRNA ligase (418 aa).

Tyr-34 contacts L-tyrosine. Residues 39-48 (PTADSLHLGH) carry the 'HIGH' region motif. Positions 169 and 173 each coordinate L-tyrosine. A 'KMSKS' region motif is present at residues 229–233 (KFGKS). Lys-232 is a binding site for ATP. The 59-residue stretch at 352–410 (LNIVELLVTSGIVNSKRQAREDVQNGAIYVNGERVQDLDYTLSDSDKIDGELTVIRRGK) folds into the S4 RNA-binding domain.

Belongs to the class-I aminoacyl-tRNA synthetase family. TyrS type 1 subfamily. In terms of assembly, homodimer.

It localises to the cytoplasm. The catalysed reaction is tRNA(Tyr) + L-tyrosine + ATP = L-tyrosyl-tRNA(Tyr) + AMP + diphosphate + H(+). Catalyzes the attachment of tyrosine to tRNA(Tyr) in a two-step reaction: tyrosine is first activated by ATP to form Tyr-AMP and then transferred to the acceptor end of tRNA(Tyr). The protein is Tyrosine--tRNA ligase of Streptococcus suis (strain 98HAH33).